A 211-amino-acid chain; its full sequence is Small ribosomal subunit protein uS3 (211 aa).

In terms of domain architecture, KH type-2 spans 16-85; sequence IDEYFKTKLV…NPQIEVKQVE (70 aa).

This sequence belongs to the universal ribosomal protein uS3 family. As to quaternary structure, part of the 30S ribosomal subunit.

In terms of biological role, binds the lower part of the 30S subunit head. The sequence is that of Small ribosomal subunit protein uS3 from Methanococcus maripaludis (strain C5 / ATCC BAA-1333).